The primary structure comprises 265 residues: Small ribosomal subunit protein uS2 (265 aa).

Belongs to the universal ribosomal protein uS2 family.

The sequence is that of Small ribosomal subunit protein uS2 from Microcystis aeruginosa (strain NIES-843 / IAM M-2473).